A 135-amino-acid chain; its full sequence is ATP synthase epsilon chain (135 aa).

The span at 90 to 103 (DVRRAESAKERAES) shows a compositional bias: basic and acidic residues. A disordered region spans residues 90-115 (DVRRAESAKERAESHLNNNDEDTDIN).

This sequence belongs to the ATPase epsilon chain family. F-type ATPases have 2 components, CF(1) - the catalytic core - and CF(0) - the membrane proton channel. CF(1) has five subunits: alpha(3), beta(3), gamma(1), delta(1), epsilon(1). CF(0) has three main subunits: a, b and c.

It localises to the cell membrane. Functionally, produces ATP from ADP in the presence of a proton gradient across the membrane. The chain is ATP synthase epsilon chain from Staphylococcus carnosus (strain TM300).